A 1889-amino-acid polypeptide reads, in one-letter code: Treslin (1889 aa).

Phosphoserine occurs at positions 295, 599, 820, 861, 919, 934, 1002, 1027, and 1078. Residues 812–832 (DSMSQESMSPPPSSSTHRSVS) show a composition bias toward low complexity. Positions 812-836 (DSMSQESMSPPPSSSTHRSVSAITE) are disordered. The disordered stretch occupies residues 979-1063 (RLLHRQIKGR…RENFPVQSIQ (85 aa)). The segment covering 1020–1050 (LSFSRTNSGSFYSVSQPKSRSVQRIHSSQQE) has biased composition (polar residues). Disordered stretches follow at residues 1098–1421 (EIST…SQFS), 1471–1508 (LPGE…SSSE), 1520–1543 (GKQR…SPQT), 1630–1714 (SCTP…SLEQ), 1730–1751 (VCQL…ETSW), and 1841–1875 (QGRT…TLSR). Over residues 1127-1179 (TAQTLLYTPERLQNSPTEMTSAEGTISEATIKTPSSHGYNSPFASKVTSQKTV) the composition is skewed to polar residues. Thr1134 is modified (phosphothreonine). Ser1141 carries the phosphoserine modification. Low complexity predominate over residues 1187–1197 (SPPLTKLPSTP). Positions 1203–1219 (QPPQCSSDCTWPHSVNS) are enriched in polar residues. The segment covering 1339-1351 (TSPSVTSSVSCPV) has biased composition (low complexity). Basic residues predominate over residues 1373–1382 (KLRRSCRKKS). Ser1406 is modified (phosphoserine). Positions 1496–1508 (LVPAPSSVSSSSE) are enriched in low complexity. Composition is skewed to polar residues over residues 1525–1543 (DAAQ…SPQT) and 1652–1662 (WTPSPKQSGKT). The segment covering 1705 to 1714 (PEGKERSLEQ) has biased composition (basic and acidic residues).

The protein belongs to the treslin family. As to quaternary structure, interacts with TOPBP1 (via BRCT domains); interaction takes place in a CDK2-dependent manner. Component of the replisome complex composed of at least DONSON, MCM2, MCM7, PCNA and TICRR.

It localises to the nucleus. Regulator of DNA replication and S/M and G2/M checkpoints. Regulates the triggering of DNA replication initiation via its interaction with TOPBP1 by participating in CDK2-mediated loading of CDC45L onto replication origins. Required for the transition from pre-replication complex (pre-RC) to pre-initiation complex (pre-IC). Required to prevent mitotic entry after treatment with ionizing radiation. The protein is Treslin (Ticrr) of Mus musculus (Mouse).